The chain runs to 2290 residues: Autophagy-related protein 2 (2290 aa).

Positions 10 to 99 (WCKVMLQRYM…MCIEDLQLTF (90 aa)) constitute a Chorein N-terminal domain. The segment at 829–1549 (DSMMKSVSAD…PNRDHSAFVV (721 aa)) is required for epg-6 binding. Disordered regions lie at residues 1678-1727 (IGSK…LGDL), 1805-1851 (DDLF…DLTG), 1898-1919 (SETERDSSASPVTSSPIKPARN), and 1967-2003 (EHGNFLDSIDNEDDNEKQKIEEEMEEDEKEEEEERNK). The segment covering 1681–1692 (KKTTPKTSVSSS) has biased composition (low complexity). Pro residues predominate over residues 1714–1723 (RPSPVQPPTP). Over residues 1810 to 1830 (QSYSSSSSETESESSAPQSSQ) the composition is skewed to low complexity. Positions 1972 to 2011 (LDSIDNEDDNEKQKIEEEMEEDEKEEEEERNKEIQEAVER) form a coiled coil. Acidic residues predominate over residues 1988–1999 (EEMEEDEKEEEE).

It belongs to the ATG2 family. As to quaternary structure, interacts with epg-6; the interaction is direct.

The protein localises to the preautophagosomal structure membrane. It localises to the lipid droplet. It is found in the endoplasmic reticulum membrane. The protein resides in the cytoplasm. It catalyses the reaction a 1,2-diacyl-sn-glycero-3-phospho-L-serine(in) = a 1,2-diacyl-sn-glycero-3-phospho-L-serine(out). The enzyme catalyses a 1,2-diacyl-sn-glycero-3-phosphoethanolamine(in) = a 1,2-diacyl-sn-glycero-3-phosphoethanolamine(out). Its function is as follows. Lipid transfer protein involved in autophagosome assembly and in the distribution of atg-9 and atg-13 during the autophagy-mediated degradation of protein aggregates. Tethers the edge of the isolation membrane (IM) to the endoplasmic reticulum (ER) and mediates direct lipid transfer from ER to IM for IM expansion. Binds to the ER exit site (ERES), which is the membrane source for autophagosome formation, and extracts phospholipids from the membrane source to the IM for membrane expansion. Involved in autophagy-mediated degradation of ribosomal RNA and ribosomal proteins in lysosomes, which is essential for maintaining nucleotide homeostasis. The sequence is that of Autophagy-related protein 2 from Caenorhabditis elegans.